We begin with the raw amino-acid sequence, 428 residues long: MMTYQEIFNEIKNKAYFKNHRHVLIAVSGGVDSMNLLHFLYLFQDKLKIRIGIAHVNHKQRSESDSEEAYLKCWAKKHDIPIYVSNFEGIFSEKAARDWRYAFFKSIMLKNNYSALVTAHHSDDQAETILMRLIRGSRLRHLSGIKSVQPFANGQLIRPFLTFSKKDLPEIFHFEDSSNRELSFLRNRVRNNYLPLLKQENPRFIQGLNQLALENSLLFQAFKELTNHITTTDLTEFNEQSKSIQYFLLQDYLEGFPDLDLKKSQFTQLLQIIQIAKQGYYYLKKDYYIFIDKFSFKITKIVPKTELVKEEKMLEYDSNLCYRDYYFSFMPKSNEDQGQVNIPLFSLSSIKLRSRQSGDYISFGHFSKKIRRLFIDEKFTIAERQNAIVGEQDGEIIFVLVGDKTYLRKACKHDIMLAKLYIDKLEKG.

An ATP-binding site is contributed by 28–33 (SGGVDS).

Belongs to the tRNA(Ile)-lysidine synthase family.

It localises to the cytoplasm. The catalysed reaction is cytidine(34) in tRNA(Ile2) + L-lysine + ATP = lysidine(34) in tRNA(Ile2) + AMP + diphosphate + H(+). Ligates lysine onto the cytidine present at position 34 of the AUA codon-specific tRNA(Ile) that contains the anticodon CAU, in an ATP-dependent manner. Cytidine is converted to lysidine, thus changing the amino acid specificity of the tRNA from methionine to isoleucine. The sequence is that of tRNA(Ile)-lysidine synthase from Streptococcus pyogenes serotype M6 (strain ATCC BAA-946 / MGAS10394).